The sequence spans 109 residues: Tyrosine-protein phosphatase 4 (109 aa).

Residues 1 to 109 form the Tyrosine-protein phosphatase domain; it reads SKSASIVMLT…QNSGNHPIVI (109 aa). Substrate is bound at residue Glu-78.

It belongs to the protein-tyrosine phosphatase family.

It catalyses the reaction O-phospho-L-tyrosyl-[protein] + H2O = L-tyrosyl-[protein] + phosphate. This Styela plicata (Wrinkled sea squirt) protein is Tyrosine-protein phosphatase 4 (STY-4).